Reading from the N-terminus, the 571-residue chain is MDHTAPTYMLANLTHLHSEQLLQGLNLLRQHHELCDIILRVGDVKIHAHKVVLASISPYFKAMFTGNLSEKENSEVEFQCIDEAALQAIVEYAYTGTVFISQDTVESLLPAANLLQIKLVLKECCAFLESQLDPGNCIGISRFAETYGCHDLYLAATKFICQNFESVCQTEEFFELTHADLDEIVSNDCLNVATEETVFYALESWIKYDVQERQKYLAQLLNSVRLPLLSVKFLTRLYEANHLIRDDRTCKHLLNEALKYHFMPEHRLSHQTVLMTRPRCAPKVLCAVGGKSGLFACLDSVEMYFPQNDSWIGLAPLNIPRYEFGICVLDQKVFVIGGIETSVRPGMTVRKHENSVECWNPDTNTWTSLERMNESRSTLGVAVLAGEVFALGGYDGQSYLQSVEKYIPKIRQWQPVAPMTTTRSCFAAAVLDGMLYAIGGYGPAHMNSVERYDPSKDSWEMVAPMADKRIHFGVGVMLGFIFVVGGHNGVSHLSSIERYDPHQNQWTVCRPMKEPRTGVGAAVIDNYLYVVGGHSGSSYLNTVQKYDPISDTWLDSAGMIYCRCNFGLTAL.

The region spanning 35–102 (CDIILRVGDV…AYTGTVFISQ (68 aa)) is the BTB domain. Kelch repeat units lie at residues 284-331 (VLCA…VLDQ), 332-386 (KVFV…VLAG), 387-433 (EVFA…VLDG), 435-479 (LYAI…VMLG), 480-526 (FIFV…VIDN), and 528-570 (LYVV…GLTA).

The polypeptide is Kelch-like protein 28 (Klhl28) (Mus musculus (Mouse)).